The chain runs to 247 residues: Small ribosomal subunit protein uS3 (247 aa).

The KH type-2 domain occupies 38–106; sequence IRDFLSEGLD…QVQLNILEVK (69 aa). Positions 214–226 are enriched in basic and acidic residues; that stretch reads SLMNARDERPSRG. A disordered region spans residues 214–247; the sequence is SLMNARDERPSRGRRERPRRGGARRQRAEQKQEG. A compositionally biased stretch (basic residues) spans 227 to 238; sequence RRERPRRGGARR.

This sequence belongs to the universal ribosomal protein uS3 family. As to quaternary structure, part of the 30S ribosomal subunit. Forms a tight complex with proteins S10 and S14.

Functionally, binds the lower part of the 30S subunit head. Binds mRNA in the 70S ribosome, positioning it for translation. The chain is Small ribosomal subunit protein uS3 from Corynebacterium jeikeium (strain K411).